The chain runs to 101 residues: Large ribosomal subunit protein uL23 (101 aa).

This sequence belongs to the universal ribosomal protein uL23 family. As to quaternary structure, part of the 50S ribosomal subunit. Contacts protein L29, and trigger factor when it is bound to the ribosome.

Its function is as follows. One of the early assembly proteins it binds 23S rRNA. One of the proteins that surrounds the polypeptide exit tunnel on the outside of the ribosome. Forms the main docking site for trigger factor binding to the ribosome. This chain is Large ribosomal subunit protein uL23, found in Thiobacillus denitrificans (strain ATCC 25259 / T1).